The chain runs to 87 residues: Small ribosomal subunit protein bS20 (87 aa).

Residues 1–22 form a disordered region; sequence MANSAQARKRARQSLKARAHNA. The span at 7–19 shows a compositional bias: basic residues; sequence ARKRARQSLKARA.

It belongs to the bacterial ribosomal protein bS20 family.

Functionally, binds directly to 16S ribosomal RNA. This is Small ribosomal subunit protein bS20 from Laribacter hongkongensis (strain HLHK9).